Reading from the N-terminus, the 486-residue chain is Ribulose bisphosphate carboxylase large chain (486 aa).

The propeptide occupies 1 to 2 (MS). Residues Asn123 and Thr173 each contribute to the substrate site. Lys175 serves as the catalytic Proton acceptor. Residue Lys177 participates in substrate binding. Lys201, Asp203, and Glu204 together coordinate Mg(2+). Lys201 is subject to N6-carboxylysine. Ser208 bears the Phosphoserine mark. His294 (proton acceptor) is an active-site residue. Substrate contacts are provided by Arg295 and His327. Phosphothreonine is present on Thr330. Ser379 is a substrate binding site.

Belongs to the RuBisCO large chain family. Type I subfamily. As to quaternary structure, heterohexadecamer of 8 large chains and 8 small chains; disulfide-linked. The disulfide link is formed within the large subunit homodimers. It depends on Mg(2+) as a cofactor. The disulfide bond which can form in the large chain dimeric partners within the hexadecamer appears to be associated with oxidative stress and protein turnover.

It is found in the plastid. It localises to the chloroplast. It catalyses the reaction 2 (2R)-3-phosphoglycerate + 2 H(+) = D-ribulose 1,5-bisphosphate + CO2 + H2O. The enzyme catalyses D-ribulose 1,5-bisphosphate + O2 = 2-phosphoglycolate + (2R)-3-phosphoglycerate + 2 H(+). RuBisCO catalyzes two reactions: the carboxylation of D-ribulose 1,5-bisphosphate, the primary event in carbon dioxide fixation, as well as the oxidative fragmentation of the pentose substrate in the photorespiration process. Both reactions occur simultaneously and in competition at the same active site. This Aethionema grandiflorum (Persian stone-cress) protein is Ribulose bisphosphate carboxylase large chain.